The sequence spans 89 residues: Small ribosomal subunit protein uS15 (89 aa).

This sequence belongs to the universal ribosomal protein uS15 family. Part of the 30S ribosomal subunit. Forms a bridge to the 50S subunit in the 70S ribosome, contacting the 23S rRNA.

One of the primary rRNA binding proteins, it binds directly to 16S rRNA where it helps nucleate assembly of the platform of the 30S subunit by binding and bridging several RNA helices of the 16S rRNA. Functionally, forms an intersubunit bridge (bridge B4) with the 23S rRNA of the 50S subunit in the ribosome. This Jannaschia sp. (strain CCS1) protein is Small ribosomal subunit protein uS15.